The following is a 59-amino-acid chain: MAVPKKRTSKSKKKIRETVWREKANQARIKAFSLAQSILTGRSKSFYYTTTEKDSNLSE.

It belongs to the bacterial ribosomal protein bL32 family.

It is found in the plastid. It localises to the chloroplast. The sequence is that of Large ribosomal subunit protein bL32c from Physcomitrium patens (Spreading-leaved earth moss).